A 133-amino-acid chain; its full sequence is Small ribosomal subunit protein uS11 (133 aa).

This sequence belongs to the universal ribosomal protein uS11 family. As to quaternary structure, part of the 30S ribosomal subunit. Interacts with proteins S7 and S18. Binds to IF-3.

Located on the platform of the 30S subunit, it bridges several disparate RNA helices of the 16S rRNA. Forms part of the Shine-Dalgarno cleft in the 70S ribosome. The polypeptide is Small ribosomal subunit protein uS11 (Bordetella petrii (strain ATCC BAA-461 / DSM 12804 / CCUG 43448)).